Here is a 554-residue protein sequence, read N- to C-terminus: Protein NODULATION SIGNALING PATHWAY 1 (554 aa).

Residues 76–165 (TTSTTSLEPN…NSNNGNNKDG (90 aa)) form a disordered region. Residues 82 to 91 (LEPNSFNNIP) show a composition bias toward polar residues. A compositionally biased stretch (basic and acidic residues) spans 95 to 107 (LPKKRNAEDELSL). Positions 150–162 (AKANGSNSNNGNN) are enriched in low complexity. The region spanning 159 to 548 (NGNNKDGRWA…QPVSFCSLWK (390 aa)) is the GRAS domain. Residues 166–227 (RWAEQLLNPC…HHLSSSSSST (62 aa)) form a leucine repeat I (LRI) region. Positions 246-315 (LLKFYEFSPW…GGPPPLVRLT (70 aa)) are VHIID. Positions 281–285 (LHILD) match the VHIID motif. The interval 331 to 373 (TPFSIGPCGDTFSSGLLGYAQSLNVNLQIKKLDNHPLQTLNAK) is leucine repeat II (LRII). The interval 383–468 (LIVCAQFRLH…RDSDERKMME (86 aa)) is PFYRE. The tract at residues 471–548 (AAKALTNQRE…QPVSFCSLWK (78 aa)) is SAW.

The protein belongs to the GRAS family. In terms of tissue distribution, expressed in epidermal and cortical root cells.

The protein resides in the nucleus. In terms of biological role, transcriptional regulator essential for Nod-factor-induced gene expression. Acts downstream of calcium spiking. May be a target of DMI3, a calcium/calmodulin-dependent protein kinase (CCaMK). Is essential for Nod factor-elicited expression of ERN1. Transcription factor involved in the control of strigolactone biosynthesis in roots through the activation of the beta-carotene isomerase D27, which participates in a pathway leading to biosynthesis of strigolactones. The protein is Protein NODULATION SIGNALING PATHWAY 1 of Medicago truncatula (Barrel medic).